The sequence spans 898 residues: Translation initiation factor IF-2 (898 aa).

The interval 51–302 (KEHGDATGSE…RKGRINKPMS (252 aa)) is disordered. Composition is skewed to basic and acidic residues over residues 100–164 (SSVE…KRET) and 171–230 (RSDE…KETV). The segment covering 234–245 (QENTDYHVTTSR) has biased composition (polar residues). Residues 263–273 (RRSTKANKRKM) are compositionally biased toward basic residues. The segment covering 274–286 (SSRDDNQERDSRP) has biased composition (basic and acidic residues). The span at 287 to 297 (RGGKAGRKGRI) shows a compositional bias: basic residues. Residues 397–566 (SRAPVVTIMG…LLQAEVLELK (170 aa)) enclose the tr-type G domain. A G1 region spans residues 406-413 (GHVDHGKT). 406–413 (GHVDHGKT) lines the GTP pocket. The interval 431 to 435 (GITQH) is G2. Residues 452–455 (DTPG) are G3. GTP-binding positions include 452 to 456 (DTPGH) and 506 to 509 (NKID). The G4 stretch occupies residues 506–509 (NKID). The interval 542–544 (SAK) is G5.

The protein belongs to the TRAFAC class translation factor GTPase superfamily. Classic translation factor GTPase family. IF-2 subfamily.

It is found in the cytoplasm. One of the essential components for the initiation of protein synthesis. Protects formylmethionyl-tRNA from spontaneous hydrolysis and promotes its binding to the 30S ribosomal subunits. Also involved in the hydrolysis of GTP during the formation of the 70S ribosomal complex. This Vibrio cholerae serotype O1 (strain ATCC 39541 / Classical Ogawa 395 / O395) protein is Translation initiation factor IF-2.